We begin with the raw amino-acid sequence, 225 residues long: Ethylene-responsive transcription factor 3 (225 aa).

The span at 1–12 shows a compositional bias: low complexity; that stretch reads MRRGRAAAAPAP. 2 disordered regions span residues 1–29 and 82–193; these read MRRGRAAAAPAPVTGEPNGSGGSKEIRFR and NFPL…NIAS. Residues 27–84 constitute a DNA-binding region (AP2/ERF); sequence RFRGVRKRPWGRFAAEIRDPWKKTRVWLGTFDSAEDAARAYDAAARALRGPKAKTNFP. Over residues 118–134 the composition is skewed to low complexity; the sequence is SQRPTSSSMSSTVESFS. A compositionally biased stretch (basic and acidic residues) spans 176 to 185; it reads DHGDCEKEND. The EAR-like (transcriptional repression) signature appears at 202 to 208; sequence FDLNLPP.

Belongs to the ethylene-response factor family. Class 2 subfamily.

It is found in the nucleus. In terms of biological role, transcription factor that binds to the GCC-box pathogenesis-related promoter element. Involved in the regulation of gene expression by stress factors and by components of stress signal transduction pathways. Probably acts as a transcriptional repressor and may regulate other AtERFs. The protein is Ethylene-responsive transcription factor 3 (ERF3) of Nicotiana tabacum (Common tobacco).